A 1165-amino-acid polypeptide reads, in one-letter code: MTVSTHHDDSPGLSGRLRDLLHHVFGNQKSPTVYPNAPGNSAKPVPTGLADDIDKLGFKDIDTLLIFLNSAVKGVNDDQQFLLEKMIQLLAKLPPASREGKKLTDGLINDLWDSLDHPPVASLGKGFSFREPDGSNNNIHLPSLGAANTPYARSTKPLVFQNPNPPDPATIFDTLMVRDPAKFRPHPNKISSMLFYLATIITHDIFQTSPRDFNINLTSSYLDLSPLYGRNHDEQMAVRTGKDGLLKPDTFSSKRVIGFPPGVGAFLIMFNRFHNYVVTQLAKINEGGRFKRPTTPDDTAGWETYDNSLFQTGRLITCGLYINIVLGDYVRTILNLNRANTTWNLDPRTKEGKSLLSKPTPEAVGNQVSVEFNLIYRWHCTISERDDKWTTNAMREALGGQDPATAKMEDVMRALGMFEKNIPDEPEKRTLAGLTRQSDGAFDDTELVKILQESIEDVAGAFGPNHVPACMRAIEILGIKQSRTWNVATLNEFRQFIGLTPHDSFYHMNPDPKICKILAQMYDSPDAVELYPGIMAEAAKPPFSPGSGLCPPYTTSRAILSDAVSLVRGDRFYTVDYTPRNITNWGFNEASTDKAVDWGHVIYKLFFRAFPNHFLPNSVYAHFPFVVPSENKLIFEGLGAANKYSWDPPKARAPIQFIRSHKAVLEVLSNQKDYKVTWGPAIKMLSGDPATSFALAGDEPANAASRHHVIAALTAPKQWRDEVRRFYEVTTRDLLRRHGAPVHGVGAGPRTHEVDVIRDVIGLAHARFMASLFSLPLKEEGKEEGAYGEHELYRSLVTIFAAIFWDSDVCNSLKLHQASKAAADKMSALIAEHVREMEAGTGFLGALGKLKDLITGNDVHANGNGVYTNGNGVYTNGNGVHTNGNGVHTNGNGVPHAAPSLRSFGDQLLQRMLSQDGRSIEETVSGTILPVVMAGTANQTQLLAQCLDYYLGVGEKHLPEMKRLAMLNTSEADEKLLKYTMEGCRIRGCVALYRAVVTDQAVDDTIPCIPNKDDPTFARPLSNPQVAESARTLKLSTGTRMLVDLTTASHDPAAFPDPDEVRLDRPLESYVHFGLGPHRCAGEPISQIALSSVMKVLLQLDGLRRAAGPRGEIRSYPASQWPGQAGRPPRDPAWSGLRTFTSADQSAFSPLATTMKINWEGRGDL.

Residues 104–448 form a fatty acid alpha-dioxygenase region; the sequence is TDGLINDLWD…DGAFDDTELV (345 aa). His203 contacts heme b. Ca(2+) is bound by residues Asp204, Ser219, Tyr221, Asp223, and Ser225. Residue Tyr376 is part of the active site. Heme b is bound at residue His379. Residues 666–1161 form an epoxy alcohol synthase region; the sequence is EVLSNQKDYK…ATTMKINWEG (496 aa). Residue Cys1080 coordinates heme. The segment at 1114-1134 is disordered; it reads RSYPASQWPGQAGRPPRDPAW.

The protein belongs to the peroxidase family. As to quaternary structure, homotetramer. Requires heme b as cofactor. Ca(2+) serves as cofactor. The cofactor is heme. In terms of processing, the N-terminus is blocked.

The catalysed reaction is (9Z,12Z)-octadecadienoate + O2 = (8R,9Z,12Z)-8-hydroperoxyoctadeca-9,12-dienoate. The enzyme catalyses (8R,9Z,12Z)-8-hydroperoxyoctadeca-9,12-dienoate = (7S,8S,9Z,12Z)-7,8-dihydroxyoctadeca-9,12-dienoate. In terms of biological role, 7,8-linoleate diol synthase is a bifunctional enzyme that converts linoleic acid (18:2n-6) into 8-hydroperoxy-8(E),12(Z)-octadecadienoic acid (8-HPODE) and then catalyzes the isomerization of the resulting hydroperoxide to 7,8-dihydroxy-9(Z),12(Z)-octadecadienoic acid (7,8-DiHODE). The protein is Linoleate diol synthase of Gaeumannomyces graminis (Turf grass take-all root rot fungus).